A 395-amino-acid chain; its full sequence is Phosphatidylinositol 4-phosphate 5-kinase-like protein 1 (395 aa).

Residues 1 to 25 (MATPSLRSHEIPAHSQEAGNKSISS) are disordered. One can recognise a PIPK domain in the interval 37–394 (ARQSRVGLFE…RLCRWAEVHT (358 aa)).

Interacts with type I phosphatidylinositol 4-phosphate 5-kinases, including PIP5K1A and PIP5K1B. Highly expressed in brain and testis, relatively to heart, spleen, lung, liver, skeletal muscle and kidney.

It is found in the cytoplasm. Its subcellular location is the membrane. In terms of biological role, may act as a scaffold to localize and regulate type I phosphatidylinositol 4-phosphate 5-kinases to specific compartments within the cell, where they generate PI(4,5)P2 for actin nucleation, signaling and scaffold protein recruitment and conversion to PI(3,4,5)P3. The polypeptide is Phosphatidylinositol 4-phosphate 5-kinase-like protein 1 (Pip5kl1) (Mus musculus (Mouse)).